A 295-amino-acid chain; its full sequence is Cuticle collagen 3A3 (295 aa).

The tract at residues 81–278 is disordered; the sequence is AITSSEENGG…GRPGEPGICP (198 aa). Composition is skewed to pro residues over residues 97 to 109 and 146 to 160; these read PGPP…PGRP and AGPP…PPGD. 3 triple-helical region regions span residues 98-127, 147-203, and 212-277; these read GPPG…PGLP, GPPG…VGED, and GDQG…PGIC. Low complexity predominate over residues 172 to 182; that stretch reads QDGIPGQQGTK. Residues 217 to 228 show a composition bias toward pro residues; it reads PGEPGPEGPPGE. Residues 229–244 are compositionally biased toward low complexity; sequence PGLQGPVGMPGQVGQK. Over residues 261 to 271 the composition is skewed to pro residues; the sequence is RPGPPGPPGRP.

This sequence belongs to the cuticular collagen family.

Nematode cuticles are composed largely of collagen-like proteins. The cuticle functions both as an exoskeleton and as a barrier to protect the worm from its environment. In Haemonchus contortus (Barber pole worm), this protein is Cuticle collagen 3A3 (3A3).